We begin with the raw amino-acid sequence, 829 residues long: Protein roadkill (829 aa).

Composition is skewed to low complexity over residues 24–36, 122–140, and 266–288; these read EQQQ…QQQQ, TPAA…QAAP, and SSSS…SSSS. Disordered regions lie at residues 24–47, 106–142, 266–296, and 313–400; these read EQQQ…CCEN, SSLQ…APSV, SSSS…SHHS, and HLNQ…NQQQ. Positions 313–322 are enriched in basic residues; sequence HLNQQQHHHP. Composition is skewed to low complexity over residues 323-353, 372-382, and 389-400; these read LSAS…QQQH, SSSSSSSSSSS, and SSSSSNSNNQQQ. One can recognise an MATH domain in the interval 486–616; that stretch reads KFSYMWTINN…EDKLTIFCEV (131 aa). The BTB domain maps to 655-722; the sequence is SDVTLSVGGR…IYTGKAPNLE (68 aa).

The protein belongs to the Tdpoz family. As to quaternary structure, interacts with ci and gft/CUL3. Expressed near the anterio-posterior compartment boundary of antenna, leg and wing disks.

It is found in the nucleus. It functions in the pathway protein modification; protein ubiquitination. Functionally, involved in segment polarity. In complex with gft/CUL3, promotes ubiquitination of ci and its subsequent degradation by the proteasome, which results in hh signaling attenuation. This regulation may be important during eye formation for proper packing of ommatidia into a hexagonal array. The sequence is that of Protein roadkill (rdx) from Drosophila melanogaster (Fruit fly).